The sequence spans 326 residues: Glyceraldehyde-3-phosphate dehydrogenase, cytosolic (326 aa).

NAD(+)-binding positions include 2 to 3 (RI), Asp-24, and Arg-71. D-glyceraldehyde 3-phosphate is bound by residues 142–144 (SCT), Thr-173, 202–203 (TG), and Arg-225. Cys-143 serves as the catalytic Nucleophile. Asn-307 contacts NAD(+).

The protein belongs to the glyceraldehyde-3-phosphate dehydrogenase family.

It is found in the cytoplasm. The enzyme catalyses D-glyceraldehyde 3-phosphate + phosphate + NAD(+) = (2R)-3-phospho-glyceroyl phosphate + NADH + H(+). It functions in the pathway carbohydrate degradation; glycolysis; pyruvate from D-glyceraldehyde 3-phosphate: step 1/5. Its function is as follows. Key enzyme in glycolysis that catalyzes the first step of the pathway by converting D-glyceraldehyde 3-phosphate (G3P) into 3-phospho-D-glyceroyl phosphate. Essential for the maintenance of cellular ATP levels and carbohydrate metabolism. The protein is Glyceraldehyde-3-phosphate dehydrogenase, cytosolic (GAPC) of Nicotiana tabacum (Common tobacco).